The following is a 1100-amino-acid chain: Conjugal transfer protein TraA (1100 aa).

Residue 404-411 (GRAGAGKT) coordinates ATP.

Belongs to the MobA/MobL family.

The protein is Conjugal transfer protein TraA (traA) of Agrobacterium fabrum (strain C58 / ATCC 33970) (Agrobacterium tumefaciens (strain C58)).